Reading from the N-terminus, the 538-residue chain is Syncytin-1 (538 aa).

Positions 1–20 (MALPYHIFLFTVLLPSFTLT) are cleaved as a signal peptide. The Extracellular portion of the chain corresponds to 21–443 (APPPCRCMTS…NIGPWGLFSQ (423 aa)). Residue asparagine 169 is glycosylated (N-linked (GlcNAc...) asparagine). Positions 186-189 (CWMC) match the CXXC motif. 3 disulfides stabilise this stretch: cysteine 186-cysteine 189, cysteine 186-cysteine 405, and cysteine 397-cysteine 404. Residues asparagine 208, asparagine 214, asparagine 234, asparagine 242, asparagine 245, and asparagine 281 are each glycosylated (N-linked (GlcNAc...) asparagine). Positions 320–340 (ILPFVMAAGVLGALGTGIGGI) are fusion peptide. The segment at 380–396 (LQNRRALDLLTAERGGT) is immunosuppression. The short motif at 397-405 (CLFLGEECC) is the CX6CC element. Asparagine 409 carries N-linked (GlcNAc...) asparagine glycosylation. A helical membrane pass occupies residues 444–464 (WMPWILPFLGPLAAIILLLLF). The interval 465-484 (GPCIFNLLVNFVSSRIEAVK) is essential for the fusiogenic function. Residues 465-538 (GPCIFNLLVN…LLRPNSAGSS (74 aa)) lie on the Cytoplasmic side of the membrane. Residues 501 to 538 (PLDWPASPRSDVNDIKGTPPEEISTAQPLLRPNSAGSS) are disordered.

This sequence belongs to the gamma type-C retroviral envelope protein family. HERV class-I W env subfamily. As to quaternary structure, the mature envelope protein (Env) consists of a trimer of SU-TM heterodimers attached probably by a labile interchain disulfide bond. Interacts with the C-type lectin CD209/DC-SIGN. In terms of processing, specific enzymatic cleavages in vivo yield mature proteins. Envelope glycoproteins are synthesized as an inactive precursor that is heavily N-glycosylated and processed likely by furin in the Golgi to yield the mature SU and TM proteins. The cleavage site between SU and TM requires the minimal sequence [KR]-X-[KR]-R. The CXXC motif is highly conserved across a broad range of retroviral envelope proteins. It is thought to participate in the formation of a labile disulfide bond possibly with the CX6CC motif present in the transmembrane protein.

The protein resides in the cell membrane. The protein localises to the virion. Its function is as follows. This endogenous retroviral envelope protein has retained its original fusogenic properties and participates in trophoblast fusion and the formation of a syncytium during placenta morphogenesis. May recognize and induce fusion through binding of SLC1A4 and SLC1A5. In terms of biological role, endogenous envelope proteins may have kept, lost or modified their original function during evolution. Retroviral envelope proteins mediate receptor recognition and membrane fusion during early infection. The surface protein (SU) mediates receptor recognition, while the transmembrane protein (TM) acts as a class I viral fusion protein. The protein may have at least 3 conformational states: pre-fusion native state, pre-hairpin intermediate state, and post-fusion hairpin state. During viral and target cell membrane fusion, the coiled coil regions (heptad repeats) assume a trimer-of-hairpins structure, positioning the fusion peptide in close proximity to the C-terminal region of the ectodomain. The formation of this structure appears to drive apposition and subsequent fusion of membranes. The chain is Syncytin-1 (ERVW-1) from Pongo pygmaeus (Bornean orangutan).